We begin with the raw amino-acid sequence, 333 residues long: Holliday junction branch migration complex subunit RuvB (333 aa).

A large ATPase domain (RuvB-L) region spans residues 1–182 (MDERLVSGSA…FGVISRLEYY (182 aa)). ATP contacts are provided by residues L21, R22, G63, K66, T67, T68, 129 to 131 (EDY), R172, Y182, and R219. T67 contacts Mg(2+). Residues 183–253 (QVDQLAQIIE…LAVEALERLQ (71 aa)) are small ATPAse domain (RuvB-S). Residues 256-333 (RLGLDHIDHK…AHLGMEVPKR (78 aa)) form a head domain (RuvB-H) region. R311 and R316 together coordinate DNA.

This sequence belongs to the RuvB family. As to quaternary structure, homohexamer. Forms an RuvA(8)-RuvB(12)-Holliday junction (HJ) complex. HJ DNA is sandwiched between 2 RuvA tetramers; dsDNA enters through RuvA and exits via RuvB. An RuvB hexamer assembles on each DNA strand where it exits the tetramer. Each RuvB hexamer is contacted by two RuvA subunits (via domain III) on 2 adjacent RuvB subunits; this complex drives branch migration. In the full resolvosome a probable DNA-RuvA(4)-RuvB(12)-RuvC(2) complex forms which resolves the HJ.

It is found in the cytoplasm. The catalysed reaction is ATP + H2O = ADP + phosphate + H(+). In terms of biological role, the RuvA-RuvB-RuvC complex processes Holliday junction (HJ) DNA during genetic recombination and DNA repair, while the RuvA-RuvB complex plays an important role in the rescue of blocked DNA replication forks via replication fork reversal (RFR). RuvA specifically binds to HJ cruciform DNA, conferring on it an open structure. The RuvB hexamer acts as an ATP-dependent pump, pulling dsDNA into and through the RuvAB complex. RuvB forms 2 homohexamers on either side of HJ DNA bound by 1 or 2 RuvA tetramers; 4 subunits per hexamer contact DNA at a time. Coordinated motions by a converter formed by DNA-disengaged RuvB subunits stimulates ATP hydrolysis and nucleotide exchange. Immobilization of the converter enables RuvB to convert the ATP-contained energy into a lever motion, pulling 2 nucleotides of DNA out of the RuvA tetramer per ATP hydrolyzed, thus driving DNA branch migration. The RuvB motors rotate together with the DNA substrate, which together with the progressing nucleotide cycle form the mechanistic basis for DNA recombination by continuous HJ branch migration. Branch migration allows RuvC to scan DNA until it finds its consensus sequence, where it cleaves and resolves cruciform DNA. This Geobacillus thermodenitrificans (strain NG80-2) protein is Holliday junction branch migration complex subunit RuvB.